A 328-amino-acid chain; its full sequence is Glycerophosphodiester phosphodiesterase GDPD4 (328 aa).

The helical transmembrane segment at 35–55 (TILFAVIFLAIFPPLYFHFKL) threads the bilayer. In terms of domain architecture, GP-PDE spans 73-312 (PLVCAHGGDS…SDPSMFQGLM (240 aa)).

The protein belongs to the glycerophosphoryl diester phosphodiesterase family. Expressed in rosette and cauline leaves.

Its subcellular location is the membrane. The enzyme catalyses a sn-glycero-3-phosphodiester + H2O = an alcohol + sn-glycerol 3-phosphate + H(+). This Arabidopsis thaliana (Mouse-ear cress) protein is Glycerophosphodiester phosphodiesterase GDPD4.